The sequence spans 359 residues: Protein mab-21-like 2 (359 aa).

Belongs to the mab-21 family.

The protein resides in the nucleus. It localises to the cytoplasm. Required for eye morphogenesis. May promote the survival of proliferating retinal progenitor cells. The chain is Protein mab-21-like 2 (mab21l2) from Danio rerio (Zebrafish).